The chain runs to 229 residues: NAD(P)H-quinone oxidoreductase subunit K, chloroplastic (229 aa).

The [4Fe-4S] cluster site is built by Cys43, Cys44, Cys108, and Cys139.

It belongs to the complex I 20 kDa subunit family. In terms of assembly, NDH is composed of at least 16 different subunits, 5 of which are encoded in the nucleus. It depends on [4Fe-4S] cluster as a cofactor.

It localises to the plastid. It is found in the chloroplast thylakoid membrane. The enzyme catalyses a plastoquinone + NADH + (n+1) H(+)(in) = a plastoquinol + NAD(+) + n H(+)(out). It carries out the reaction a plastoquinone + NADPH + (n+1) H(+)(in) = a plastoquinol + NADP(+) + n H(+)(out). NDH shuttles electrons from NAD(P)H:plastoquinone, via FMN and iron-sulfur (Fe-S) centers, to quinones in the photosynthetic chain and possibly in a chloroplast respiratory chain. The immediate electron acceptor for the enzyme in this species is believed to be plastoquinone. Couples the redox reaction to proton translocation, and thus conserves the redox energy in a proton gradient. This chain is NAD(P)H-quinone oxidoreductase subunit K, chloroplastic, found in Coffea arabica (Arabian coffee).